The following is a 177-amino-acid chain: O-acetyl-ADP-ribose deacetylase (177 aa).

The Macro domain occupies 1–175; sequence MKSRIHVLQG…LYNRLLTQQG (175 aa). Residues 11–12, asparagine 25, 33–35, and 122–126 each bind substrate; these read DI, GVD, and STGVY. Aspartate 35 functions as the Proton acceptor in the catalytic mechanism.

It belongs to the MacroD-type family. YmdB subfamily. As to quaternary structure, homodimer. Interacts with RNase III.

It carries out the reaction 3''-O-acetyl-ADP-D-ribose + H2O = ADP-D-ribose + acetate + H(+). The catalysed reaction is 2''-O-acetyl-ADP-D-ribose + H2O = ADP-D-ribose + acetate + H(+). In terms of biological role, deacetylates O-acetyl-ADP ribose to yield ADP-ribose and free acetate. Down-regulates ribonuclease 3 (RNase III) activity. Acts by interacting directly with the region of the ribonuclease that is required for dimerization/activation. This Escherichia fergusonii (strain ATCC 35469 / DSM 13698 / CCUG 18766 / IAM 14443 / JCM 21226 / LMG 7866 / NBRC 102419 / NCTC 12128 / CDC 0568-73) protein is O-acetyl-ADP-ribose deacetylase.